The primary structure comprises 227 residues: UPF0659 protein YMR090W (227 aa).

The protein belongs to the UPF0659 family.

It is found in the cytoplasm. This Saccharomyces cerevisiae (strain ATCC 204508 / S288c) (Baker's yeast) protein is UPF0659 protein YMR090W.